Here is a 79-residue protein sequence, read N- to C-terminus: Acyl carrier protein (79 aa).

The region spanning 2–77 is the Carrier domain; it reads SEVADKVKKI…DAVEYIEKQK (76 aa). O-(pantetheine 4'-phosphoryl)serine is present on S37.

The protein belongs to the acyl carrier protein (ACP) family. Post-translationally, 4'-phosphopantetheine is transferred from CoA to a specific serine of apo-ACP by AcpS. This modification is essential for activity because fatty acids are bound in thioester linkage to the sulfhydryl of the prosthetic group.

The protein localises to the cytoplasm. It functions in the pathway lipid metabolism; fatty acid biosynthesis. Its function is as follows. Carrier of the growing fatty acid chain in fatty acid biosynthesis. This Granulibacter bethesdensis (strain ATCC BAA-1260 / CGDNIH1) protein is Acyl carrier protein.